A 122-amino-acid chain; its full sequence is MGTGLRSQSLRGPRPSYGKLQEPWGRPTEGRLRRALSLRQGREKSRSSDGGPERLDTLGQEWLPGSLGDTEQLIQAEQEGSQRWLRQYQQKIRRRWESFVTSFPNVTLSRSASPQPPLGTTS.

The span at 1–10 (MGTGLRSQSL) shows a compositional bias: polar residues. A disordered region spans residues 1-68 (MGTGLRSQSL…GQEWLPGSLG (68 aa)). The segment covering 40-56 (QGREKSRSSDGGPERLD) has biased composition (basic and acidic residues).

This is an uncharacterized protein from Bos taurus (Bovine).